The following is a 197-amino-acid chain: Nucleoid occlusion factor SlmA (197 aa).

In terms of domain architecture, HTH tetR-type spans 7–67; that stretch reads INRREHILQC…GLIEFIEESL (61 aa). The H-T-H motif DNA-binding region spans 30 to 49; it reads TTAKLAAEVGVSEAALYRHF. Residues 109–136 adopt a coiled-coil conformation; sequence DALLGENERLRSRISQLFAKIETHLKQI.

Belongs to the nucleoid occlusion factor SlmA family. As to quaternary structure, homodimer. Interacts with FtsZ.

The protein localises to the cytoplasm. It is found in the nucleoid. Functionally, required for nucleoid occlusion (NO) phenomenon, which prevents Z-ring formation and cell division over the nucleoid. Acts as a DNA-associated cell division inhibitor that binds simultaneously chromosomal DNA and FtsZ, and disrupts the assembly of FtsZ polymers. SlmA-DNA-binding sequences (SBS) are dispersed on non-Ter regions of the chromosome, preventing FtsZ polymerization at these regions. The sequence is that of Nucleoid occlusion factor SlmA from Shewanella halifaxensis (strain HAW-EB4).